A 354-amino-acid polypeptide reads, in one-letter code: MTPTTTTAELTTEFDYDEDATPCVFTDVLNQSKPVTLFLYGVVFLFGSIGNFLVIFTITWRRRIQCSGDVYFINLAAADLLFVCTLPLWMQYLLDHNSLASVPCTLLTACFYVAMFASLCFITEIALDRYYAIVYMRYRPVKQACLFSIFWWIFAVIIAIPHFMVVTKKDNQCMTDYDYLEVSYPIILNVELMLGAFVIPLSVISYCYYRISRIVAVSQSRHKGRIVRVLIAVVLVFIIFWLPYHLTLFVDTLKLLKWISSSCEFERSLKRALILTESLAFCHCCLNPLLYVFVGTKFRQELHCLLAEFRQRLFSRDVSWYHSMSFSRRGSPSRRETSSDTLSDEVCRVSQIIP.

Residues 1–37 (MTPTTTTAELTTEFDYDEDATPCVFTDVLNQSKPVTL) lie on the Extracellular side of the membrane. Asn-30 carries N-linked (GlcNAc...) asparagine; by host glycosylation. The helical transmembrane segment at 38 to 58 (FLYGVVFLFGSIGNFLVIFTI) threads the bilayer. At 59-69 (TWRRRIQCSGD) the chain is on the cytoplasmic side. A helical membrane pass occupies residues 70-90 (VYFINLAAADLLFVCTLPLWM). The Extracellular segment spans residues 91-101 (QYLLDHNSLAS). The chain crosses the membrane as a helical span at residues 102–122 (VPCTLLTACFYVAMFASLCFI). The Cytoplasmic portion of the chain corresponds to 123-145 (TEIALDRYYAIVYMRYRPVKQAC). Residues 146-166 (LFSIFWWIFAVIIAIPHFMVV) traverse the membrane as a helical segment. Residues 167-183 (TKKDNQCMTDYDYLEVS) are Extracellular-facing. A helical transmembrane segment spans residues 184-204 (YPIILNVELMLGAFVIPLSVI). Residues 205 to 228 (SYCYYRISRIVAVSQSRHKGRIVR) are Cytoplasmic-facing. Residues 229–249 (VLIAVVLVFIIFWLPYHLTLF) form a helical membrane-spanning segment. Over 250–273 (VDTLKLLKWISSSCEFERSLKRAL) the chain is Extracellular. Residues 274-294 (ILTESLAFCHCCLNPLLYVFV) form a helical membrane-spanning segment. The Cytoplasmic portion of the chain corresponds to 295–354 (GTKFRQELHCLLAEFRQRLFSRDVSWYHSMSFSRRGSPSRRETSSDTLSDEVCRVSQIIP).

This sequence belongs to the G-protein coupled receptor 1 family. In terms of assembly, interacts with host GPRASP1; this interaction targets US28 to lysosomes for degradation. Interacts with host CX3CL1/Fractalkine (via N-terminus). Phosphorylated. High phosphorylation occurs concomitantly with receptor endocytosis and correlate with low receptor presence at the plasma membrane.

The protein localises to the host cell membrane. Functionally, receptor for a C-C type chemokine. Binds to a great number of different CC-chemokines including CCL5/RANTES, CCL2/MCP-1, CCL3/MIP-1-alpha as well as CX3CL1/Fractalkine. Transduces signals resulting in the activation of MAP kinase signaling pathways and augmentation of intracellular calcium ion levels, leading to alterations in chemotactic behavior of vascular smooth muscle cells and macrophages. The US28 receptor also exhibits high levels of agonist-independent signaling activity and agonist-independent endocytosis. Interacts with the host Gi complex without activating it, thereby probably interfering with the chemokine-Gi signaling. May also function as a G protein sink to sequester G protein from the cell surface via internalization. Interacts with endogenous Gaq/11 subunits and thereby constitutively activates phospholipase C. This is Envelope protein US28 (US28) from Human cytomegalovirus (strain Merlin) (HHV-5).